The primary structure comprises 141 residues: UPF0310 protein SSA_0254 (141 aa).

This sequence belongs to the UPF0310 family.

In Streptococcus sanguinis (strain SK36), this protein is UPF0310 protein SSA_0254.